A 366-amino-acid polypeptide reads, in one-letter code: 3-beta-hydroxysteroid dehydrogenase (366 aa).

Tyr-154 functions as the Proton donor in the catalytic mechanism.

Belongs to the 3-beta-HSD family.

It carries out the reaction testosterone + NAD(+) = androst-4-ene-3,17-dione + NADH + H(+). It catalyses the reaction testosterone + NADP(+) = androst-4-ene-3,17-dione + NADPH + H(+). Functionally, catalyzes the degradation of testosterone into androstenedione. The polypeptide is 3-beta-hydroxysteroid dehydrogenase (Mycolicibacterium neoaurum (Mycobacterium neoaurum)).